A 278-amino-acid chain; its full sequence is Tryptophan synthase alpha chain (278 aa).

Catalysis depends on proton acceptor residues E50 and D61.

This sequence belongs to the TrpA family. As to quaternary structure, tetramer of two alpha and two beta chains.

It catalyses the reaction (1S,2R)-1-C-(indol-3-yl)glycerol 3-phosphate + L-serine = D-glyceraldehyde 3-phosphate + L-tryptophan + H2O. It participates in amino-acid biosynthesis; L-tryptophan biosynthesis; L-tryptophan from chorismate: step 5/5. Its function is as follows. The alpha subunit is responsible for the aldol cleavage of indoleglycerol phosphate to indole and glyceraldehyde 3-phosphate. This chain is Tryptophan synthase alpha chain, found in Rhodopseudomonas palustris (strain HaA2).